A 571-amino-acid chain; its full sequence is Optineurin (571 aa).

2 disordered regions span residues 1–32 (MSHQ…HPNL) and 100–144 (LSHE…DQLR). Positions 38–170 (EELLQQMKEL…VSELQLKLNS (133 aa)) form a coiled coil. The segment at 58–209 (MKLNNQAMKG…GPTRTVSIGT (152 aa)) is interaction with Rab8. The span at 100–143 (LSHENEKLKEELGKLKGKSERSSEDPTDDSRLPRAEAEQEKDQL) shows a compositional bias: basic and acidic residues. The short motif at 176–181 (DSFVEI) is the LIR element. Serine 177 carries the post-translational modification Phosphoserine; by TBK1. Basic and acidic residues predominate over residues 186–197 (GEAEGSVKEIKH). 2 disordered regions span residues 186 to 210 (GEAE…IGTS) and 255 to 291 (VSDF…TVGS). The residue at position 198 (serine 198) is a Phosphoserine. Positions 201-210 (PTRTVSIGTS) are enriched in polar residues. Residues 233 to 502 (CLREGNQKVE…LLKENDAFED (270 aa)) adopt a coiled-coil conformation. Basic and acidic residues-rich tracts occupy residues 255 to 268 (VSDF…RSEI) and 275 to 286 (STEKENEEEKGP). The residue at position 336 (serine 336) is a Phosphoserine. The interval 405–571 (TRKESEKVDR…LQIHVMDCII (167 aa)) is interaction with HD. Residues 406–514 (RKESEKVDRA…RQSLMEMQSR (109 aa)) are interaction with MYO6. Residues 468-473 (DFHAER) carry the UBAN motif. Residue serine 520 is modified to Phosphoserine. Residues 541-571 (QRNIPIHSCPKCGEVLPDIDTLQIHVMDCII) form a CCHC NOA-type zinc finger. Positions 549, 552, 565, and 569 each coordinate Zn(2+).

Self-associates. Interacts with HD. Interacts with GTF3A. Interacts with MYO6. Interacts (via UBAN) with ubiquitinated TFRC. Interacts with GTP-bound Rab8 (RAB8A and/or RAB8B). Interacts with TBC1D17. Interacts with TBK1. Interacts with TRAF3. Binds to linear ubiquitin chains. Interacts with LC3 family members MAP1LC3A, MAP1LC3B, GABARAP, GABARAPL1 and GABARAPL2; OPTN phosphorylation increases the association (at least with MAP1LC3B). Interacts with RAB12; the interaction may be indirect. Interacts with TBK1; this interaction leads to the Golgi localization of TBK1 and its subsequent activation. Interacts with palmitoyltransferase ZDHHC17/HIP14; the interaction does not lead to palmitoylation of OPTN. Interacts with CYLD. Interacts with TOM1; the interaction is indirect and is mediated by MYO6, which acts as a bridge between TOM1 and OPTN. Interacts with USP12; the interaction is independent of USP12 deubiquitinase activity and may be involved in regulation of autophagic flux. Post-translationally, phosphorylated by TBK1, leading to restrict bacterial proliferation in case of infection. In terms of tissue distribution, present in aqueous humor of the eye (at protein level).

It localises to the cytoplasm. The protein resides in the perinuclear region. The protein localises to the golgi apparatus. Its subcellular location is the trans-Golgi network. It is found in the cytoplasmic vesicle. It localises to the autophagosome. The protein resides in the recycling endosome. Plays an important role in the maintenance of the Golgi complex, in membrane trafficking, in exocytosis, through its interaction with myosin VI and Rab8. Links myosin VI to the Golgi complex and plays an important role in Golgi ribbon formation. Negatively regulates the induction of IFNB in response to RNA virus infection. Plays a neuroprotective role in the eye and optic nerve. Probably part of the TNF-alpha signaling pathway that can shift the equilibrium toward induction of cell death. May act by regulating membrane trafficking and cellular morphogenesis via a complex that contains Rab8 and huntingtin (HD). Mediates the interaction of Rab8 with the probable GTPase-activating protein TBC1D17 during Rab8-mediated endocytic trafficking, such as that of transferrin receptor (TFRC/TfR); regulates Rab8 recruitment to tubules emanating from the endocytic recycling compartment. Autophagy receptor that interacts directly with both the cargo to become degraded and an autophagy modifier of the MAP1 LC3 family; targets ubiquitin-coated bacteria (xenophagy) and appears to function in the same pathway as SQSTM1 and CALCOCO2/NDP52. In Macaca mulatta (Rhesus macaque), this protein is Optineurin (OPTN).